The sequence spans 222 residues: Phosphoenolpyruvate guanylyltransferase (222 aa).

Residues T147, G163, and S166 each coordinate phosphoenolpyruvate.

Belongs to the CofC family.

The enzyme catalyses phosphoenolpyruvate + GTP + H(+) = enolpyruvoyl-2-diphospho-5'-guanosine + diphosphate. It functions in the pathway cofactor biosynthesis; coenzyme F420 biosynthesis. Functionally, guanylyltransferase that catalyzes the activation of phosphoenolpyruvate (PEP) as enolpyruvoyl-2-diphospho-5'-guanosine, via the condensation of PEP with GTP. It is involved in the biosynthesis of coenzyme F420, a hydride carrier cofactor. The sequence is that of Phosphoenolpyruvate guanylyltransferase from Streptosporangium roseum (strain ATCC 12428 / DSM 43021 / JCM 3005 / KCTC 9067 / NCIMB 10171 / NRRL 2505 / NI 9100).